Reading from the N-terminus, the 424-residue chain is Adenylyltransferase and sulfurtransferase UBA4 (424 aa).

ATP is bound by residues G76, D97, 104–108 (TNLHR), K121, and 165–166 (DS). Zn(2+)-binding residues include C206 and C209. C223 acts as the Glycyl thioester intermediate; for adenylyltransferase activity in catalysis. C283 provides a ligand contact to Zn(2+). A Rhodanese domain is found at 326 to 422 (RNSDHVLLDV…WYSEVDQNIP (97 aa)). The Cysteine persulfide intermediate; for sulfurtransferase activity role is filled by C382.

In the N-terminal section; belongs to the HesA/MoeB/ThiF family. UBA4 subfamily. Zn(2+) serves as cofactor.

The protein localises to the cytoplasm. Its subcellular location is the cytosol. The protein operates within tRNA modification; 5-methoxycarbonylmethyl-2-thiouridine-tRNA biosynthesis. In terms of biological role, plays a central role in 2-thiolation of mcm(5)S(2)U at tRNA wobble positions of cytosolic tRNA(Lys), tRNA(Glu) and tRNA(Gln). Acts by mediating the C-terminal thiocarboxylation of sulfur carrier URM1. Its N-terminus first activates URM1 as acyl-adenylate (-COAMP), then the persulfide sulfur on the catalytic cysteine is transferred to URM1 to form thiocarboxylation (-COSH) of its C-terminus. The reaction probably involves hydrogen sulfide that is generated from the persulfide intermediate and that acts as a nucleophile towards URM1. Subsequently, a transient disulfide bond is formed. Does not use thiosulfate as sulfur donor; NFS1 probably acting as a sulfur donor for thiocarboxylation reactions. Prior mcm(5) tRNA modification by the elongator complex is required for 2-thiolation. May also be involved in protein urmylation. The polypeptide is Adenylyltransferase and sulfurtransferase UBA4 (Meyerozyma guilliermondii (strain ATCC 6260 / CBS 566 / DSM 6381 / JCM 1539 / NBRC 10279 / NRRL Y-324) (Yeast)).